A 314-amino-acid polypeptide reads, in one-letter code: Melanoma-associated antigen 12 (314 aa).

Residues 1–14 (MPLEQRSQHCKPEE) are compositionally biased toward basic and acidic residues. A disordered region spans residues 1 to 72 (MPLEQRSQHC…HSPQGASTLP (72 aa)). Low complexity predominate over residues 17–44 (EAQGEALGLVGAQAPATEEQETASSSST). Positions 109–308 (LSRKMAELVH…ISYPPLHEWA (200 aa)) constitute an MAGE domain.

Expressed in many tumors of several types, such as melanoma, head and neck squamous cell carcinoma, lung carcinoma and breast carcinoma, but not in normal tissues except for testes.

In terms of biological role, not known, though may play a role tumor transformation or progression. In vitro promotes cell viability in melanoma cell lines. The chain is Melanoma-associated antigen 12 (MAGEA12) from Homo sapiens (Human).